A 649-amino-acid polypeptide reads, in one-letter code: Acetyl-coenzyme A synthetase (649 aa).

CoA-binding positions include R191–R194, T312, and N336. ATP contacts are provided by residues G388–P390, D412–T417, D501, and R516. S524 is a binding site for CoA. ATP is bound at residue R527. Residues V538, H540, and V543 each coordinate Mg(2+). R585 contributes to the CoA binding site. The residue at position 610 (K610) is an N6-acetyllysine.

The protein belongs to the ATP-dependent AMP-binding enzyme family. Mg(2+) serves as cofactor. Acetylated. Deacetylation by the SIR2-homolog deacetylase activates the enzyme.

It catalyses the reaction acetate + ATP + CoA = acetyl-CoA + AMP + diphosphate. Catalyzes the conversion of acetate into acetyl-CoA (AcCoA), an essential intermediate at the junction of anabolic and catabolic pathways. AcsA undergoes a two-step reaction. In the first half reaction, AcsA combines acetate with ATP to form acetyl-adenylate (AcAMP) intermediate. In the second half reaction, it can then transfer the acetyl group from AcAMP to the sulfhydryl group of CoA, forming the product AcCoA. This chain is Acetyl-coenzyme A synthetase, found in Marinobacter nauticus (strain ATCC 700491 / DSM 11845 / VT8) (Marinobacter aquaeolei).